The following is a 62-amino-acid chain: MTIVFQLTMFALIAISFLLIIGVPITFASPDGWSSNKNIVFSGVSLWIVLVFAVGILNSFIS.

2 consecutive transmembrane segments (helical) span residues 8–28 (TMFA…ITFA) and 41–61 (FSGV…NSFI).

The protein belongs to the PsbZ family. In terms of assembly, PSII is composed of 1 copy each of membrane proteins PsbA, PsbB, PsbC, PsbD, PsbE, PsbF, PsbH, PsbI, PsbJ, PsbK, PsbL, PsbM, PsbT, PsbY, PsbZ, Psb30/Ycf12, at least 3 peripheral proteins of the oxygen-evolving complex and a large number of cofactors. It forms dimeric complexes.

It localises to the plastid. The protein resides in the chloroplast thylakoid membrane. In terms of biological role, may control the interaction of photosystem II (PSII) cores with the light-harvesting antenna, regulates electron flow through the 2 photosystem reaction centers. PSII is a light-driven water plastoquinone oxidoreductase, using light energy to abstract electrons from H(2)O, generating a proton gradient subsequently used for ATP formation. The protein is Photosystem II reaction center protein Z of Welwitschia mirabilis (Tree tumbo).